Consider the following 134-residue polypeptide: MFCRSPLVAVILLVLATHIVLALGDATRIAASETVPSDSSQTTRKSTRRTTSVDNKRRLRQQIMGKDGPVVNDVHAEERGFLNNKLAYKMFGDGLDMQEKIIKSGGKGLKNVLRKRLYNKVSRAEHRQVPATRH.

The signal sequence occupies residues 1–22 (MFCRSPLVAVILLVLATHIVLA). A disordered region spans residues 32–60 (SETVPSDSSQTTRKSTRRTTSVDNKRRLR). The segment covering 37 to 52 (SDSSQTTRKSTRRTTS) has biased composition (low complexity). A RxLR-dEER motif is present at residues 57–79 (RRLRQQIMGKDGPVVNDVHAEER).

This sequence belongs to the RxLR effector family.

The protein resides in the secreted. Its subcellular location is the host nucleus. Functionally, effector that acts as a broad suppressor of cell death to interrupt plant immunity. Inhibits cell death induced by cell death-inducing proteins, including the PAMP elicitor INF1 from P.infestans. The protein is Secreted RxLR effector protein 1 of Plasmopara viticola (Downy mildew of grapevine).